The sequence spans 257 residues: Homeobox protein goosecoid (257 aa).

Positions 160–219 form a DNA-binding region, homeobox; the sequence is KRRHRTIFTDEQLEALENLFQETKYPDVGTREQLARKVHLREEKVEVWFKNRRAKWRRQK. The tract at residues 213-257 is disordered; that stretch reads AKWRRQKRSSSEESENAEKWNKTSSSKASPEKREEEGKSDLDSDS. Residues 241–257 show a composition bias toward basic and acidic residues; sequence SPEKREEEGKSDLDSDS.

Belongs to the paired homeobox family. Bicoid subfamily.

It localises to the nucleus. In terms of biological role, regulates chordin (CHRD). May play a role in spatial programing within discrete embryonic fields or lineage compartments during organogenesis. In concert with NKX3-2, plays a role in defining the structural components of the middle ear; required for the development of the entire tympanic ring. Probably involved in the regulatory networks that define neural crest cell fate specification and determine mesoderm cell lineages in mammals. The chain is Homeobox protein goosecoid (GSC) from Pongo pygmaeus (Bornean orangutan).